We begin with the raw amino-acid sequence, 476 residues long: Transcription factor HBP-1b(c1) (476 aa).

Disordered stretches follow at residues 1-29, 133-159, and 171-207; these read ESRRGGGGPAAAAAAAGDPRGPMPGFGAP, HNNDNWGESSMADTSPRTDTSTDPDID, and QLAAPTASDSSDKSRDKLDHKSLRRLAQNREAARKSR. A compositionally biased stretch (low complexity) spans 10–25; it reads AAAAAAAGDPRGPMPG. The segment covering 135-144 has biased composition (polar residues); sequence NDNWGESSMA. Positions 180–191 are enriched in basic and acidic residues; it reads SSDKSRDKLDHK. The region spanning 189-252 is the bZIP domain; sequence DHKSLRRLAQ…SSGDQSQSAS (64 aa). Residues 191-211 form a basic motif region; that stretch reads KSLRRLAQNREAARKSRLRKK. Positions 201–242 form a coiled coil; the sequence is EAARKSRLRKKAYIQNLESSRLKLTQLEQELQRARQQGIFIS. The leucine-zipper stretch occupies residues 217-231; it reads LESSRLKLTQLEQEL. The 218-residue stretch at 256-473 folds into the DOG1 domain; that stretch reads AVAFDMEYAR…RALSSLWLAR (218 aa).

The protein belongs to the bZIP family. In terms of assembly, binds DNA as a dimer.

Its subcellular location is the nucleus. Functionally, transcriptional activator that binds specifically to the DNA sequence 5'-TGACG-3'. Recognizes ocs elements like the as-1 motif of the cauliflower mosaic virus 35S promoter. Binding to the as-1-like cis elements mediate auxin- and salicylic acid-inducible transcription. Binds to the hexamer motif 5'-ACGTCA-3' of histone gene promoters. In Triticum aestivum (Wheat), this protein is Transcription factor HBP-1b(c1).